Consider the following 160-residue polypeptide: MDTISNKTGEGGVIMVALEDLLNWAERSSLWPITFGLACCAIEMMGAYASHYDLDRLGVIPRNSPRQADVMIVSGTVTFKMADSIRRLYDQMPEPRYVISMGSCANCGGPYWQHGYHVVKGVDRIIPVDVYVPGCPPRPEALIGGILKLQEKIKAKLTYS.

4 residues coordinate [4Fe-4S] cluster: Cys39, Cys40, Cys104, and Cys135.

It belongs to the complex I 20 kDa subunit family. NDH-1 is composed of 14 different subunits. Subunits NuoB, C, D, E, F, and G constitute the peripheral sector of the complex. [4Fe-4S] cluster is required as a cofactor.

It is found in the cell membrane. The enzyme catalyses a quinone + NADH + 5 H(+)(in) = a quinol + NAD(+) + 4 H(+)(out). In terms of biological role, NDH-1 shuttles electrons from NADH, via FMN and iron-sulfur (Fe-S) centers, to quinones in the respiratory chain. The immediate electron acceptor for the enzyme in this species is believed to be a menaquinone. Couples the redox reaction to proton translocation (for every two electrons transferred, four hydrogen ions are translocated across the cytoplasmic membrane), and thus conserves the redox energy in a proton gradient. The polypeptide is NADH-quinone oxidoreductase subunit B (Amoebophilus asiaticus (strain 5a2)).